Here is a 294-residue protein sequence, read N- to C-terminus: Elongation factor Ts (294 aa).

Positions 78–81 (TDFV) are involved in Mg(2+) ion dislocation from EF-Tu.

This sequence belongs to the EF-Ts family.

It is found in the cytoplasm. Associates with the EF-Tu.GDP complex and induces the exchange of GDP to GTP. It remains bound to the aminoacyl-tRNA.EF-Tu.GTP complex up to the GTP hydrolysis stage on the ribosome. This chain is Elongation factor Ts, found in Mycoplasma mobile (strain ATCC 43663 / 163K / NCTC 11711) (Mesomycoplasma mobile).